A 513-amino-acid chain; its full sequence is uncharacterized protein (513 aa).

A disordered region spans residues 1–48; that stretch reads MGSSEEQSVPGDDFYEESGDLNTGLSLVLRPAKSNEGESSLSSPKGSK. The segment covering 37–48 has biased composition (polar residues); the sequence is GESSLSSPKGSK. Residues Ser43, Ser84, and Ser123 each carry the phosphoserine modification. Disordered regions lie at residues 210–229, 236–287, 390–414, and 453–481; these read DGNH…GDLA, TRDS…GSKS, AKED…AEPP, and SVLS…TQGC.

This is an uncharacterized protein from Mus musculus (Mouse).